A 327-amino-acid chain; its full sequence is Biotin synthase (327 aa).

In terms of domain architecture, Radical SAM core spans 49–282; it reads FNKDKIDLCS…NKVIRLCGGR (234 aa). Positions 67, 71, and 74 each coordinate [4Fe-4S] cluster. 4 residues coordinate [2Fe-2S] cluster: serine 110, cysteine 142, cysteine 201, and arginine 277.

The protein belongs to the radical SAM superfamily. Biotin synthase family. In terms of assembly, homodimer. Requires [4Fe-4S] cluster as cofactor. The cofactor is [2Fe-2S] cluster.

The catalysed reaction is (4R,5S)-dethiobiotin + (sulfur carrier)-SH + 2 reduced [2Fe-2S]-[ferredoxin] + 2 S-adenosyl-L-methionine = (sulfur carrier)-H + biotin + 2 5'-deoxyadenosine + 2 L-methionine + 2 oxidized [2Fe-2S]-[ferredoxin]. Its pathway is cofactor biosynthesis; biotin biosynthesis; biotin from 7,8-diaminononanoate: step 2/2. Its function is as follows. Catalyzes the conversion of dethiobiotin (DTB) to biotin by the insertion of a sulfur atom into dethiobiotin via a radical-based mechanism. The sequence is that of Biotin synthase from Methanococcus maripaludis (strain C5 / ATCC BAA-1333).